A 334-amino-acid chain; its full sequence is Protein-methionine-sulfoxide reductase catalytic subunit MsrP (334 aa).

A signal peptide (tat-type signal) is located at residues methionine 1–alanine 44. Mo-molybdopterin contacts are provided by residues asparagine 88, tyrosine 91–glutamate 92, cysteine 146, threonine 181, asparagine 233, arginine 238, and glycine 249–lysine 251.

Belongs to the MsrP family. As to quaternary structure, heterodimer of a catalytic subunit (MsrP) and a heme-binding subunit (MsrQ). Mo-molybdopterin serves as cofactor. In terms of processing, predicted to be exported by the Tat system. The position of the signal peptide cleavage has not been experimentally proven.

It is found in the periplasm. It carries out the reaction L-methionyl-[protein] + a quinone + H2O = L-methionyl-(S)-S-oxide-[protein] + a quinol. The enzyme catalyses L-methionyl-[protein] + a quinone + H2O = L-methionyl-(R)-S-oxide-[protein] + a quinol. Functionally, part of the MsrPQ system that repairs oxidized periplasmic proteins containing methionine sulfoxide residues (Met-O), using respiratory chain electrons. Thus protects these proteins from oxidative-stress damage caused by reactive species of oxygen and chlorine generated by the host defense mechanisms. MsrPQ is essential for the maintenance of envelope integrity under bleach stress, rescuing a wide series of structurally unrelated periplasmic proteins from methionine oxidation, including the primary periplasmic chaperone SurA and the lipoprotein Pal. The catalytic subunit MsrP is non-stereospecific, being able to reduce both (R-) and (S-) diastereoisomers of methionine sulfoxide. The protein is Protein-methionine-sulfoxide reductase catalytic subunit MsrP of Salmonella agona (strain SL483).